The following is a 338-amino-acid chain: 1-aminocyclopropane-1-carboxylate deaminase (338 aa).

N6-(pyridoxal phosphate)lysine is present on K51. The Nucleophile role is filled by S78.

It belongs to the ACC deaminase/D-cysteine desulfhydrase family. As to quaternary structure, homotrimer. Requires pyridoxal 5'-phosphate as cofactor.

The catalysed reaction is 1-aminocyclopropane-1-carboxylate + H2O = 2-oxobutanoate + NH4(+). In terms of biological role, catalyzes a cyclopropane ring-opening reaction, the irreversible conversion of 1-aminocyclopropane-1-carboxylate (ACC) to ammonia and alpha-ketobutyrate. Allows growth on ACC as a nitrogen source. In Ralstonia nicotianae (strain ATCC BAA-1114 / GMI1000) (Ralstonia solanacearum), this protein is 1-aminocyclopropane-1-carboxylate deaminase.